The chain runs to 209 residues: Inner membrane protein YjdF (209 aa).

The Periplasmic portion of the chain corresponds to 1–7 (MTRTLKP). The chain crosses the membrane as a helical span at residues 8-28 (LILNTSALTLTLILIYTGISA). Residues 29-31 (HDK) lie on the Cytoplasmic side of the membrane. Residues 32-52 (LTWLMEVTPVIIVVQLLLATA) traverse the membrane as a helical segment. Residues 53–55 (RRY) lie on the Periplasmic side of the membrane. A helical membrane pass occupies residues 56–76 (PLTPLLYTLIFLHAIILMVGG). The Cytoplasmic segment spans residues 77-131 (QYTYAKVPVGFEVQEWLGLSRNPYDKLGHFFQGLVPALVAREILVRGMYVRGRKM). The helical transmembrane segment at 132–152 (VAFLVCCVALAISAMYELIEW) threads the bilayer. At 153-177 (WAALAMGQGADDFLGTQGDQWDTQS) the chain is on the periplasmic side. Residues 178–198 (DMFCALLGALTTVIFLARFHC) form a helical membrane-spanning segment. Residues 199–209 (RQLRRFGLITG) are Cytoplasmic-facing.

It is found in the cell inner membrane. In Escherichia coli (strain K12), this protein is Inner membrane protein YjdF (yjdF).